A 91-amino-acid chain; its full sequence is Kazal-type trypsin inhibitor (91 aa).

A signal peptide spans 1–22 (MRHIGVFVGVLALALVLLVVEA). The Kazal-like domain maps to 25–78 (DAERGVCACPRIYMPVCGSNLKTYNNDCLLRCEINSDLGRANNLRKIADQACDN). Cystine bridges form between Cys31–Cys56, Cys33–Cys52, and Cys41–Cys76. A glycan (N-linked (GlcNAc...) asparagine) is linked at Asn78.

As to quaternary structure, interacts with human PLG (plasmin). In terms of tissue distribution, female salivary gland. Female gut at 3 and 24 hours after blood feeding. Female carcass. Male tissues. Not detected in ovary and fat body at 3 and 24 hours after blood feeding.

The protein resides in the secreted. Its function is as follows. Anticoagulant protein that decreases host thrombin (F2) activity via an uncompetitive inhibition mechanism. Inhibits amidolytic activity of host plasmin (PLG). Inhibits amidolytic activity of host trypsin. Inhibits trypsin-like endogenous activity from gut of female mosquitoes 24 hours after feeding and weakly affects enzyme activity from gut 3 hours after feeding, suggesting a possible role as an inhibitor of endogenous proteases. (Microbial infection) Limits host plasmin-mediated enhancement of dengue virus type 2 infection in mosquito midgut. In Aedes aegypti (Yellowfever mosquito), this protein is Kazal-type trypsin inhibitor.